A 215-amino-acid chain; its full sequence is UPF0056 membrane protein BU267 (215 aa).

The next 6 helical transmembrane spans lie at 14-34 (FFIG…FTTM), 56-76 (LILL…GISI), 81-101 (IAGG…QFIK), 120-140 (VVPL…TIVW), 150-170 (LFLC…CFEA), and 189-209 (IMGL…IGAI).

This sequence belongs to the UPF0056 (MarC) family.

Its subcellular location is the cell membrane. The polypeptide is UPF0056 membrane protein BU267 (Buchnera aphidicola subsp. Acyrthosiphon pisum (strain APS) (Acyrthosiphon pisum symbiotic bacterium)).